Here is a 413-residue protein sequence, read N- to C-terminus: Protein esc1 (413 aa).

A compositionally biased stretch (polar residues) spans 1-22 (MSSYALPSMQPTPTSSIPLRQM). Disordered regions lie at residues 1–202 (MSSY…NQPS) and 230–265 (MYVPQQQTSHSSGASYQNESANPPVQSPMQYSYSQG). Positions 23–42 (SQPTTSAPSNSASSTPYSPQ) are enriched in low complexity. Over residues 43–63 (QVPLTHNSYPLSTPSSFQHGQ) the composition is skewed to polar residues. Low complexity-rich tracts occupy residues 86–103 (SAAPASSSPTSATLSTAA) and 116–126 (SSSSYVYSVPP). Positions 127-136 (TNSTTSQASA) are enriched in polar residues. A compositionally biased stretch (low complexity) spans 150-197 (STTLTPSTTDSSSTDVSSSDSVSTSASSSNASNTVSVTSPASSSATPL). The region spanning 334-385 (ELRTSHKLAERKRRKEIKELFDDLKDALPLDKSTKSSKWGLLTRAIQYIEQL) is the bHLH domain.

As to quaternary structure, efficient DNA binding requires dimerization with another bHLH protein.

It is found in the nucleus. Its function is as follows. Involved in the sexual differentiation process. Modulate the ability of the cell to differentiate in response to the nitrogen starvation signal; in particular in response to decreases in the level of cellular cAMP. The chain is Protein esc1 (esc1) from Schizosaccharomyces pombe (strain 972 / ATCC 24843) (Fission yeast).